Reading from the N-terminus, the 217-residue chain is 3-oxo-tetronate 4-phosphate decarboxylase (217 aa).

The Zn(2+) site is built by histidine 93 and histidine 95. Residue tyrosine 120 is the Proton donor of the active site.

This sequence belongs to the aldolase class II family. AraD/FucA subfamily. The cofactor is Zn(2+).

It carries out the reaction 3-dehydro-4-O-phospho-D-erythronate + H(+) = dihydroxyacetone phosphate + CO2. The catalysed reaction is 3-dehydro-4-O-phospho-L-erythronate + H(+) = dihydroxyacetone phosphate + CO2. Functionally, catalyzes the decarboxylation of 3-oxo-tetronate 4-phosphate to dihydroxyacetone phosphate (DHAP) and CO(2). This Cupriavidus necator (strain ATCC 17699 / DSM 428 / KCTC 22496 / NCIMB 10442 / H16 / Stanier 337) (Ralstonia eutropha) protein is 3-oxo-tetronate 4-phosphate decarboxylase.